The primary structure comprises 475 residues: Ras-GEF domain-containing family member 1A (475 aa).

Residues 33 to 164 enclose the N-terminal Ras-GEF domain; it reads QDGSLVSGSL…SISQMTQNVL (132 aa). Positions 208–455 constitute a Ras-GEF domain; it reads DPLILAQQLT…FLASFENEGP (248 aa).

Guanine nucleotide exchange factor (GEF) with specificity for rap2a and other Ras family proteins (in vitro). Plays a role in cell migration. The protein is Ras-GEF domain-containing family member 1A (rasgef1a) of Xenopus tropicalis (Western clawed frog).